The primary structure comprises 501 residues: Pyruvate kinase (501 aa).

Position 50 (Arg50) interacts with substrate. K(+)-binding residues include Asn52, Ser54, Asp85, and Thr86. 52 to 55 contributes to the ATP binding site; sequence NFSH. ATP is bound by residues Arg92 and Lys178. A Mg(2+)-binding site is contributed by Glu243. Substrate is bound by residues Gly266, Asp267, and Thr299. Asp267 is a Mg(2+) binding site.

This sequence belongs to the pyruvate kinase family. In terms of assembly, homotetramer. Requires Mg(2+) as cofactor. K(+) serves as cofactor.

The catalysed reaction is pyruvate + ATP = phosphoenolpyruvate + ADP + H(+). The protein operates within carbohydrate degradation; glycolysis; pyruvate from D-glyceraldehyde 3-phosphate: step 5/5. The protein is Pyruvate kinase (PYK1) of Naumovozyma castellii (Yeast).